The sequence spans 354 residues: Uroporphyrinogen decarboxylase (354 aa).

Substrate is bound by residues 27-31 (RQAGR), F46, D77, Y154, S209, and H327.

The protein belongs to the uroporphyrinogen decarboxylase family. Homodimer.

The protein resides in the cytoplasm. The enzyme catalyses uroporphyrinogen III + 4 H(+) = coproporphyrinogen III + 4 CO2. Its pathway is porphyrin-containing compound metabolism; protoporphyrin-IX biosynthesis; coproporphyrinogen-III from 5-aminolevulinate: step 4/4. Its function is as follows. Catalyzes the decarboxylation of four acetate groups of uroporphyrinogen-III to yield coproporphyrinogen-III. In Shewanella oneidensis (strain ATCC 700550 / JCM 31522 / CIP 106686 / LMG 19005 / NCIMB 14063 / MR-1), this protein is Uroporphyrinogen decarboxylase.